A 432-amino-acid chain; its full sequence is GTPase Obg (432 aa).

Positions 1–158 (MFVDQVKIYV…RNIILELKLL (158 aa)) constitute an Obg domain. In terms of domain architecture, OBG-type G spans 159–329 (ADVGLVGFPS…LLFAIADLLE (171 aa)). Residues 165–172 (GFPSVGKS), 190–194 (FTTLV), 212–215 (DLPG), 282–285 (NKMD), and 310–312 (SAA) contribute to the GTP site. Mg(2+)-binding residues include S172 and T192. Residues 350–428 (KYEKEEPPFT…LLDYEFEFVD (79 aa)) enclose the OCT domain.

Belongs to the TRAFAC class OBG-HflX-like GTPase superfamily. OBG GTPase family. Monomer. It depends on Mg(2+) as a cofactor.

The protein resides in the cytoplasm. Functionally, an essential GTPase which binds GTP, GDP and possibly (p)ppGpp with moderate affinity, with high nucleotide exchange rates and a fairly low GTP hydrolysis rate. Plays a role in control of the cell cycle, stress response, ribosome biogenesis and in those bacteria that undergo differentiation, in morphogenesis control. In Geobacillus kaustophilus (strain HTA426), this protein is GTPase Obg.